Reading from the N-terminus, the 528-residue chain is Bifunctional dihydrofolate reductase-thymidylate synthase (528 aa).

The disordered stretch occupies residues 1-20 (MASELLANPTNGSGITRPDP). Residues 23 to 200 (TYQVVVAATQ…IRYCFTTYVR (178 aa)) enclose the DHFR domain. V27 is a substrate binding site. NADP(+) contacts are provided by residues A29 and 35 to 41 (GIGKDGK). D49 provides a ligand contact to substrate. NADP(+)-binding positions include 73 to 75 (RKT) and 94 to 97 (LTRS). Substrate-binding residues include I136, Y142, and T157. NADP(+) is bound at residue 137–144 (GGGQIYRE). Residues 202 to 528 (RNSVAELTSQ…HQKIEMKMAV (327 aa)) are thymidylate synthase. R264 serves as a coordination point for dUMP. The active site involves C409. Residues H410, 428–432 (QRSAD), N440, and 470–472 (HVY) each bind dUMP.

The protein in the N-terminal section; belongs to the dihydrofolate reductase family. This sequence in the C-terminal section; belongs to the thymidylate synthase family.

The enzyme catalyses (6S)-5,6,7,8-tetrahydrofolate + NADP(+) = 7,8-dihydrofolate + NADPH + H(+). It catalyses the reaction dUMP + (6R)-5,10-methylene-5,6,7,8-tetrahydrofolate = 7,8-dihydrofolate + dTMP. It participates in cofactor biosynthesis; tetrahydrofolate biosynthesis; 5,6,7,8-tetrahydrofolate from 7,8-dihydrofolate: step 1/1. Bifunctional enzyme. Involved in de novo dTMP biosynthesis. Key enzyme in folate metabolism. Can play two different roles depending on the source of dihydrofolate: de novo synthesis of tetrahydrofolate or recycling of the dihydrofolate released as one of the end products of the TS catalyzed reaction. Catalyzes an essential reaction for de novo glycine and purine synthesis, DNA precursor synthesis, and for the conversion of dUMP to dTMP. The chain is Bifunctional dihydrofolate reductase-thymidylate synthase from Daucus carota (Wild carrot).